The sequence spans 210 residues: MPVEIPRDLTPELVPLSWLLGQWEGQGRLGTGEAESEHFFQRVTFSSNGLPYLEYVAESWLTDEEGMKLRPLSVEMGFWALDRKLGEADGGPGLIPADIVPALTTADDVEKLRNDTSGFDITATIVHPGGISELYYGTIKGPQIELSTDAVMRGAGAKDYSAATRIFGLVNGDLFWRWDVAAEGNSLEAHASAILKKTAAPESAEQRPSE.

Residues 21 to 27 (GQWEGQG) carry the GXWXGXG motif. Residue histidine 190 coordinates heme b.

This sequence belongs to the nitrobindin family. In terms of assembly, homodimer. Heme b serves as cofactor.

It carries out the reaction peroxynitrite = nitrate. Its pathway is nitrogen metabolism. In terms of biological role, heme-binding protein able to scavenge peroxynitrite and to protect free L-tyrosine against peroxynitrite-mediated nitration, by acting as a peroxynitrite isomerase that converts peroxynitrite to nitrate. Therefore, this protein likely plays a role in peroxynitrite sensing and in the detoxification of reactive nitrogen and oxygen species (RNS and ROS, respectively). Is able to bind nitric oxide (NO) in vitro, but may act as a sensor of peroxynitrite levels in vivo. The protein is Peroxynitrite isomerase of Renibacterium salmoninarum (strain ATCC 33209 / DSM 20767 / JCM 11484 / NBRC 15589 / NCIMB 2235).